The chain runs to 179 residues: Large ribosomal subunit protein uL5 (179 aa).

The protein belongs to the universal ribosomal protein uL5 family. As to quaternary structure, part of the 50S ribosomal subunit; part of the 5S rRNA/L5/L18/L25 subcomplex. Contacts the 5S rRNA and the P site tRNA. Forms a bridge to the 30S subunit in the 70S ribosome.

Its function is as follows. This is one of the proteins that bind and probably mediate the attachment of the 5S RNA into the large ribosomal subunit, where it forms part of the central protuberance. In the 70S ribosome it contacts protein S13 of the 30S subunit (bridge B1b), connecting the 2 subunits; this bridge is implicated in subunit movement. Contacts the P site tRNA; the 5S rRNA and some of its associated proteins might help stabilize positioning of ribosome-bound tRNAs. This chain is Large ribosomal subunit protein uL5, found in Bacillus velezensis (strain DSM 23117 / BGSC 10A6 / LMG 26770 / FZB42) (Bacillus amyloliquefaciens subsp. plantarum).